Reading from the N-terminus, the 260-residue chain is Phosphatidate cytidylyltransferase (260 aa).

7 helical membrane passes run 9–29 (IIAL…LMIF), 46–66 (MIKF…IIML), 70–90 (AGPW…FIVL), 102–122 (FMDA…FMFF), 130–150 (LHYI…AYLF), 172–192 (FIGG…FVDF), and 196–216 (VWIL…GDLV).

Belongs to the CDS family.

Its subcellular location is the cell membrane. The enzyme catalyses a 1,2-diacyl-sn-glycero-3-phosphate + CTP + H(+) = a CDP-1,2-diacyl-sn-glycerol + diphosphate. The protein operates within phospholipid metabolism; CDP-diacylglycerol biosynthesis; CDP-diacylglycerol from sn-glycerol 3-phosphate: step 3/3. The protein is Phosphatidate cytidylyltransferase (cdsA) of Staphylococcus aureus (strain COL).